The following is a 305-amino-acid chain: UDP-3-O-acyl-N-acetylglucosamine deacetylase (305 aa).

Positions 79, 238, and 242 each coordinate Zn(2+). Histidine 265 serves as the catalytic Proton donor.

It belongs to the LpxC family. It depends on Zn(2+) as a cofactor.

It catalyses the reaction a UDP-3-O-[(3R)-3-hydroxyacyl]-N-acetyl-alpha-D-glucosamine + H2O = a UDP-3-O-[(3R)-3-hydroxyacyl]-alpha-D-glucosamine + acetate. Its pathway is glycolipid biosynthesis; lipid IV(A) biosynthesis; lipid IV(A) from (3R)-3-hydroxytetradecanoyl-[acyl-carrier-protein] and UDP-N-acetyl-alpha-D-glucosamine: step 2/6. Catalyzes the hydrolysis of UDP-3-O-myristoyl-N-acetylglucosamine to form UDP-3-O-myristoylglucosamine and acetate, the committed step in lipid A biosynthesis. The polypeptide is UDP-3-O-acyl-N-acetylglucosamine deacetylase (Shewanella woodyi (strain ATCC 51908 / MS32)).